The following is a 577-amino-acid chain: E3 ubiquitin-protein ligase MSL2 (577 aa).

Residues 1-116 (MNPVNATALY…CEYITQTTLA (116 aa)) form a sufficient for interaction with MSL1 region. Residues Cys-44, Cys-47, Cys-62, His-64, Cys-67, Cys-70, Cys-81, and Cys-84 each coordinate Zn(2+). The segment at 44–85 (CCVCGHLLQDPIAPTNSTCQHYVCKTCKGKKMMMKPSCSWCK) adopts an RING-type zinc-finger fold. Residue Lys-375 forms a Glycyl lysine isopeptide (Lys-Gly) (interchain with G-Cter in SUMO2) linkage. Residues 405 to 427 (TKSMKKSHEHGSKKSHSKTKPGI) form a disordered region. Basic residues predominate over residues 407-423 (SMKKSHEHGSKKSHSKT). At Ser-447 the chain carries Phosphoserine. One can recognise a CXC MSL2-type domain in the interval 457–508 (QEKKGCKCGRATQNPSVLTCRGQRCPCYSNRKACLDCICRGCQNSYMANGEK). Zn(2+) contacts are provided by Cys-462, Cys-464, Cys-476, Cys-481, Cys-483, Cys-490, Cys-493, Cys-495, and Cys-498.

The protein belongs to the MSL2 family. As to quaternary structure, component of a multisubunit histone acetyltransferase complex (MSL) at least composed of the KAT8/MOF/MYST1, MSL1/hampin, MSL2 and MSL3. Forms a MSL heterotetrameric core with MSL1.

It is found in the nucleus. It localises to the chromosome. The enzyme catalyses S-ubiquitinyl-[E2 ubiquitin-conjugating enzyme]-L-cysteine + [acceptor protein]-L-lysine = [E2 ubiquitin-conjugating enzyme]-L-cysteine + N(6)-ubiquitinyl-[acceptor protein]-L-lysine.. The protein operates within protein modification; protein ubiquitination. Its function is as follows. Non-catalytic component of the MSL histone acetyltransferase complex, a multiprotein complex that mediates the majority of histone H4 acetylation at 'Lys-16' (H4K16ac), an epigenetic mark that prevents chromatin compaction. The MSL complex is required for chromosome stability and genome integrity by maintaining homeostatic levels of H4K16ac. The MSL complex is also involved in gene dosage by promoting up-regulation of genes expressed by the X chromosome. X up-regulation is required to compensate for autosomal biallelic expression. The MSL complex also participates in gene dosage compensation by promoting expression of Tsix non-coding RNA. MSL2 plays a key role in gene dosage by ensuring biallelic expression of a subset of dosage-sensitive genes, including many haploinsufficient genes. Acts by promoting promoter-enhancer contacts, thereby preventing DNA methylation of one allele and creating a methylation-free environment for methylation-sensitive transcription factors such as SP1, KANSL1 and KANSL3. Also acts as an E3 ubiquitin ligase that promotes monoubiquitination of histone H2B at 'Lys-35' (H2BK34Ub), but not that of H2A. This activity is greatly enhanced by heterodimerization with MSL1. H2B ubiquitination in turn stimulates histone H3 methylation at 'Lys-4' (H3K4me) and 'Lys-79' (H3K79me) and leads to gene activation, including that of HOXA9 and MEIS1. Also involved in the DNA damage response by mediating ubiquitination of TP53/p53 and TP53BP1. In Homo sapiens (Human), this protein is E3 ubiquitin-protein ligase MSL2.